The primary structure comprises 220 residues: Putative 3-methyladenine DNA glycosylase (220 aa).

It belongs to the DNA glycosylase MPG family.

This chain is Putative 3-methyladenine DNA glycosylase, found in Rickettsia bellii (strain RML369-C).